The primary structure comprises 494 residues: ATP synthase subunit alpha, chloroplastic (494 aa).

170 to 177 (GDRQTGKT) provides a ligand contact to ATP.

The protein belongs to the ATPase alpha/beta chains family. F-type ATPases have 2 components, CF(1) - the catalytic core - and CF(0) - the membrane proton channel. CF(1) has five subunits: alpha(3), beta(3), gamma(1), delta(1), epsilon(1). CF(0) has four main subunits: a, b, b' and c.

The protein localises to the plastid. It is found in the chloroplast thylakoid membrane. The enzyme catalyses ATP + H2O + 4 H(+)(in) = ADP + phosphate + 5 H(+)(out). In terms of biological role, produces ATP from ADP in the presence of a proton gradient across the membrane. The alpha chain is a regulatory subunit. This Pinus thunbergii (Japanese black pine) protein is ATP synthase subunit alpha, chloroplastic.